Consider the following 83-residue polypeptide: MTDSAKPEVSGLSFEKAVAELESIVARLERGDVALDESIEIYERGEALKKHCETLLSAAENRIEKIRLDRAGKPRGVEPLDGA.

This sequence belongs to the XseB family. As to quaternary structure, heterooligomer composed of large and small subunits.

Its subcellular location is the cytoplasm. It catalyses the reaction Exonucleolytic cleavage in either 5'- to 3'- or 3'- to 5'-direction to yield nucleoside 5'-phosphates.. Its function is as follows. Bidirectionally degrades single-stranded DNA into large acid-insoluble oligonucleotides, which are then degraded further into small acid-soluble oligonucleotides. The protein is Exodeoxyribonuclease 7 small subunit of Rhizobium etli (strain ATCC 51251 / DSM 11541 / JCM 21823 / NBRC 15573 / CFN 42).